The chain runs to 134 residues: Ribosome-binding factor A (134 aa).

Belongs to the RbfA family. Monomer. Binds 30S ribosomal subunits, but not 50S ribosomal subunits or 70S ribosomes.

It localises to the cytoplasm. Its function is as follows. One of several proteins that assist in the late maturation steps of the functional core of the 30S ribosomal subunit. Associates with free 30S ribosomal subunits (but not with 30S subunits that are part of 70S ribosomes or polysomes). Required for efficient processing of 16S rRNA. May interact with the 5'-terminal helix region of 16S rRNA. The chain is Ribosome-binding factor A from Psychrobacter arcticus (strain DSM 17307 / VKM B-2377 / 273-4).